The primary structure comprises 290 residues: NAD kinase (290 aa).

Catalysis depends on D73, which acts as the Proton acceptor. Residues 73 to 74 (DG), 147 to 148 (ND), R158, R175, D177, 188 to 193 (TAYALS), and Q246 each bind NAD(+).

This sequence belongs to the NAD kinase family. A divalent metal cation is required as a cofactor.

Its subcellular location is the cytoplasm. The catalysed reaction is NAD(+) + ATP = ADP + NADP(+) + H(+). Its function is as follows. Involved in the regulation of the intracellular balance of NAD and NADP, and is a key enzyme in the biosynthesis of NADP. Catalyzes specifically the phosphorylation on 2'-hydroxyl of the adenosine moiety of NAD to yield NADP. The sequence is that of NAD kinase from Thiobacillus denitrificans (strain ATCC 25259 / T1).